The chain runs to 739 residues: MSLMLEPNPTQIKEERIYAEMGLTDEEFAMVEKILGRLPNYTETGLFSVMWSEHCSYKNSKPVLRKFPTTGERVLQGPGEGAGIVDIGDNQAVVFKMESHNHPSAIEPYQGAATGVGGIIRDVFSMGARPVALLNSLRFGELQSPRVKYLFEEVVAGIAGYGNCIGIPTVGGEVQFDPCYEGNPLVNAMCVGLINHEDIKKGQAHGAGNTVMYVGASTGRDGIHGATFASEELSESSEAKRPAVQVGDPFMEKLLIEACLELIQSDALVGIQDMGAAGLTSSSAEMASKAGMGIEMYLDDVPQRETGMTPYEMMLSESQERMLIVVKKGREQEIVDLFEKYGLAAVTMGKVTEDKMLRLFHKGEMVAEVPADALAEEAPIYHKPSQEAAYFAEFQQMKMETPKVENYKETLFALLQQPTIASKEWVYDQYDYQVRTSTVVTPGSDAAVVRVRGTEKGLAMTTDCNSRYIYLDPEMGGKIAVAEAARNIVCSGGEPLAITDCLNFGNPEKPEIFWQIEKSVDGMSEACRTLQTPVIGGNVSMYNERSGEAVYPTPTVGMVGLVHDLKHVTTQEFKQAGDLVYVIGETKAEFGGSELQKMLHGKIFGQSPSIDLDVELKRQKQVLAAIQAGLVQSAHDVAEGGLAVAISESAIGANGLGATVKLDGEATAALFAESQSRFVITVKRENKEAFEKAVEAIQVGEVTNTNEVTIHNEENEVLLTANVDEMRKAWKGAIPCLLK.

The active site involves His54. 2 residues coordinate ATP: Tyr57 and Lys96. Residue Glu98 participates in Mg(2+) binding. Substrate contacts are provided by residues 99-102 and Arg121; that span reads SHNH. His100 functions as the Proton acceptor in the catalytic mechanism. Asp122 provides a ligand contact to Mg(2+). Gln245 contributes to the substrate binding site. Asp273 provides a ligand contact to Mg(2+). Residue 317 to 319 coordinates substrate; the sequence is ESQ. Positions 500 and 537 each coordinate ATP. A Mg(2+)-binding site is contributed by Asn538. Ser540 serves as a coordination point for substrate.

It belongs to the FGAMS family. As to quaternary structure, monomer. Part of the FGAM synthase complex composed of 1 PurL, 1 PurQ and 2 PurS subunits.

Its subcellular location is the cytoplasm. It catalyses the reaction N(2)-formyl-N(1)-(5-phospho-beta-D-ribosyl)glycinamide + L-glutamine + ATP + H2O = 2-formamido-N(1)-(5-O-phospho-beta-D-ribosyl)acetamidine + L-glutamate + ADP + phosphate + H(+). Its pathway is purine metabolism; IMP biosynthesis via de novo pathway; 5-amino-1-(5-phospho-D-ribosyl)imidazole from N(2)-formyl-N(1)-(5-phospho-D-ribosyl)glycinamide: step 1/2. Functionally, part of the phosphoribosylformylglycinamidine synthase complex involved in the purines biosynthetic pathway. Catalyzes the ATP-dependent conversion of formylglycinamide ribonucleotide (FGAR) and glutamine to yield formylglycinamidine ribonucleotide (FGAM) and glutamate. The FGAM synthase complex is composed of three subunits. PurQ produces an ammonia molecule by converting glutamine to glutamate. PurL transfers the ammonia molecule to FGAR to form FGAM in an ATP-dependent manner. PurS interacts with PurQ and PurL and is thought to assist in the transfer of the ammonia molecule from PurQ to PurL. This Bacillus cereus (strain ATCC 10987 / NRS 248) protein is Phosphoribosylformylglycinamidine synthase subunit PurL.